The primary structure comprises 210 residues: High mobility group protein B2 (210 aa).

Position 3 is an N6-acetyllysine (K3). The segment at residues 9-79 (PRGKMSSYAF…RYDREMKNYV (71 aa)) is a DNA-binding region (HMG box 1). Residue C23 is modified to Cysteine sulfonic acid (-SO3H); alternate. C23 and C45 are disulfide-bonded. K30 carries the post-translational modification N6-acetyllysine. Phosphoserine is present on S35. K43 is subject to N6-acetyllysine. The residue at position 45 (C45) is a Cysteine sulfonic acid (-SO3H); alternate. Residues 71-102 (YDREMKNYVPPKGDKKGKKKDPNAPKRPPSAF) are disordered. K90 carries the post-translational modification N6-acetyllysine. A DNA-binding region (HMG box 2) is located at residues 95 to 163 (PKRPPSAFFL…KYEKDIAAYR (69 aa)). The residue at position 100 (S100) is a Phosphoserine. Cysteine sulfonic acid (-SO3H) is present on C106. Residues K114 and K141 each carry the N6-acetyllysine modification. Residues 162–172 (YRAKGKSEAGK) are compositionally biased toward basic and acidic residues. The tract at residues 162–210 (YRAKGKSEAGKKGPGRPTGSKKKNEPEDEEEEEEEEEEEDDEEEEEDEE) is disordered. A required for chemotactic activity region spans residues 165-180 (KGKSEAGKKGPGRPTG). The segment covering 187–210 (PEDEEEEEEEEEEEDDEEEEEDEE) has biased composition (acidic residues).

It belongs to the HMGB family. As to quaternary structure, interacts with POU2F2, POU2F1 and POU3F1. Component of the RAG complex composed of core components RAG1 and RAG2, and associated component HMGB1 or HMGB2. Component of the SET complex, composed of at least ANP32A, APEX1, HMGB2, NME1, SET and TREX1. Directly interacts with SET. Interacts with LEF1. Post-translationally, reduction/oxidation of cysteine residues Cys-23, Cys-45 and Cys-106 and a possible intramolecular disulfide bond involving Cys-23 and Cys-45 give rise to different redox forms with specific functional activities in various cellular compartments: 1- fully reduced HMGB2 (HMGB2C23hC45hC106h), 2- disulfide HMGB2 (HMGB2C23-C45C106h) and 3- sulfonyl HMGB2 (HMGB2C23soC45soC106so). As to expression, widely expressed in embryo. In adult mainly expressed in lymphoid organs and testes. Expressed in primary spermatocytes. Expressed in the superficial zone of articular cartilage.

The protein localises to the nucleus. It localises to the chromosome. The protein resides in the cytoplasm. Its subcellular location is the secreted. Functionally, multifunctional protein with various roles in different cellular compartments. May act in a redox sensitive manner. In the nucleus is an abundant chromatin-associated non-histone protein involved in transcription, chromatin remodeling and V(D)J recombination and probably other processes. Binds DNA with a preference to non-canonical DNA structures such as single-stranded DNA. Can bent DNA and enhance DNA flexibility by looping thus providing a mechanism to promote activities on various gene promoters by enhancing transcription factor binding and/or bringing distant regulatory sequences into close proximity. Involved in V(D)J recombination by acting as a cofactor of the RAG complex: acts by stimulating cleavage and RAG protein binding at the 23 bp spacer of conserved recombination signal sequences (RSS). Proposed to be involved in the innate immune response to nucleic acids by acting as a cytoplasmic promiscuous immunogenic DNA/RNA sensor which cooperates with subsequent discriminative sensing by specific pattern recognition receptors. In the extracellular compartment acts as a chemokine. Promotes proliferation and migration of endothelial cells implicating AGER/RAGE. Has antimicrobial activity in gastrointestinal epithelial tissues. Involved in inflammatory response to antigenic stimulus coupled with pro-inflammatory activity. May play a role in germ cell differentiation. Involved in modulation of neurogenesis probably by regulation of neural stem proliferation. Involved in articular cartilage surface maintenance implicating LEF1 and the Wnt/beta-catenin pathway. The polypeptide is High mobility group protein B2 (Hmgb2) (Mus musculus (Mouse)).